Consider the following 154-residue polypeptide: Large ribosomal subunit protein uL15 (154 aa).

Positions 1–13 are enriched in basic and acidic residues; sequence MKLNELRDHEGAT. A disordered region spans residues 1–44; the sequence is MKLNELRDHEGATKNRKRIGRGIGSGTGKTGGCGVKGQKSRSGV. Residues 21–35 are compositionally biased toward gly residues; it reads RGIGSGTGKTGGCGV.

This sequence belongs to the universal ribosomal protein uL15 family. In terms of assembly, part of the 50S ribosomal subunit.

In terms of biological role, binds to the 23S rRNA. This is Large ribosomal subunit protein uL15 from Bartonella bacilliformis (strain ATCC 35685 / KC583 / Herrer 020/F12,63).